A 79-amino-acid polypeptide reads, in one-letter code: RNA-binding protein Hfq (79 aa).

One can recognise a Sm domain in the interval 10–69; it reads DPFLNALRKEHVPVSIYLVNGIKLQGNIESFDQYVVLLRNTVTQMVYKHAISTVVPARAV.

This sequence belongs to the Hfq family. In terms of assembly, homohexamer.

Functionally, RNA chaperone that binds small regulatory RNA (sRNAs) and mRNAs to facilitate mRNA translational regulation in response to envelope stress, environmental stress and changes in metabolite concentrations. Also binds with high specificity to tRNAs. The chain is RNA-binding protein Hfq from Cupriavidus metallidurans (strain ATCC 43123 / DSM 2839 / NBRC 102507 / CH34) (Ralstonia metallidurans).